The chain runs to 499 residues: MGRCSLLLLLLLIAFLTPGAANPVSPSLRAPSSLPWSTSFRSRPTITLKYSIRYIQQKVDHFGFNIDRTFKQRYLIADNYWKEDGGSILFYTGNEGDIIWFCNNTGFMWDIAEEMKAMLVFAEHRYYGESLPFGADSFSDSRHLNFLTTEQALADFAKLIRYLKRTIPGARNQHVIALGGSYGGMLAAWFRMKYPHLVVGALASSAPIWQFNDLVPCDIFMKIVTTDFSQSGPNCSESIRRSWDAINRLAKKGTGLRWLSEALHLCTPLTKSQDVQRLKDWISETWVNVAMVDYPYESNFLQPLPAWPVKVVCQYFKYSNVPDTVMVQNIFQALNVYYNYSGQAKCLNVSETATSSLGVLGWSYQACTEMVMPTCSDGVDDMFEPHSWNMKEYSDDCFKQWGVRPRPSWIPTMYGGKNISSHTNIIFSNGELDPWSGGGVTKDITDTLLAIVIPNGAHHLDLRASNALDPVSVQLTRSLEVKYMKQWISDFYVRLRKMN.

The N-terminal stretch at Met-1 to Ala-21 is a signal peptide. Positions Asn-22–Thr-47 are excised as a propeptide. A glycan (N-linked (GlcNAc...) asparagine) is linked at Asn-103. Ser-181 functions as the Charge relay system in the catalytic mechanism. Residues His-196 to Tyr-337 are SKS domain. 4 disulfides stabilise this stretch: Cys-217/Cys-375, Cys-235/Cys-313, Cys-266/Cys-346, and Cys-367/Cys-397. A glycan (N-linked (GlcNAc...) asparagine) is linked at Asn-234. N-linked (GlcNAc...) asparagine glycans are attached at residues Asn-339 and Asn-348. An N-linked (GlcNAc...) asparagine glycan is attached at Asn-418. Catalysis depends on charge relay system residues Asp-433 and His-458.

It belongs to the peptidase S28 family. In terms of assembly, homodimer.

It is found in the lysosome. It carries out the reaction Cleavage of a -Pro-|-Xaa bond to release a C-terminal amino acid.. Functionally, cleaves C-terminal amino acids linked to proline in peptides such as angiotensin II, III and des-Arg9-bradykinin. This cleavage occurs at acidic pH, but enzymatic activity is retained with some substrates at neutral pH. This is Lysosomal Pro-X carboxypeptidase (PRCP) from Bos taurus (Bovine).